We begin with the raw amino-acid sequence, 629 residues long: UvrABC system protein C (629 aa).

The GIY-YIG domain maps to 26–105 (TSPGIYQFKN…IKELKPRYNV (80 aa)). The UVR domain occupies 219–254 (SALIRSLTENMHLAATELRFEQAAEIKAQIESLKRY).

This sequence belongs to the UvrC family. Interacts with UvrB in an incision complex.

The protein resides in the cytoplasm. Functionally, the UvrABC repair system catalyzes the recognition and processing of DNA lesions. UvrC both incises the 5' and 3' sides of the lesion. The N-terminal half is responsible for the 3' incision and the C-terminal half is responsible for the 5' incision. In Chlorobium chlorochromatii (strain CaD3), this protein is UvrABC system protein C.